A 300-amino-acid polypeptide reads, in one-letter code: Ribosomal RNA small subunit methyltransferase A (300 aa).

The S-adenosyl-L-methionine site is built by asparagine 36, valine 38, glycine 63, glutamate 84, aspartate 113, and asparagine 131.

Belongs to the class I-like SAM-binding methyltransferase superfamily. rRNA adenine N(6)-methyltransferase family. RsmA subfamily.

It localises to the cytoplasm. It catalyses the reaction adenosine(1518)/adenosine(1519) in 16S rRNA + 4 S-adenosyl-L-methionine = N(6)-dimethyladenosine(1518)/N(6)-dimethyladenosine(1519) in 16S rRNA + 4 S-adenosyl-L-homocysteine + 4 H(+). Its function is as follows. Specifically dimethylates two adjacent adenosines (A1518 and A1519) in the loop of a conserved hairpin near the 3'-end of 16S rRNA in the 30S particle. May play a critical role in biogenesis of 30S subunits. The sequence is that of Ribosomal RNA small subunit methyltransferase A from Kineococcus radiotolerans (strain ATCC BAA-149 / DSM 14245 / SRS30216).